The primary structure comprises 354 residues: Guanine nucleotide-binding protein G(i) subunit alpha-1 (354 aa).

A lipid anchor (N-myristoyl glycine) is attached at Gly2. A lipid anchor (S-palmitoyl cysteine) is attached at Cys3. One can recognise a G-alpha domain in the interval 32–354 (REVKLLLLGA…KNNLKDCGLF (323 aa)). Residues 35-48 (KLLLLGAGESGKST) are G1 motif. GTP-binding positions include 43–48 (ESGKST), 150–151 (DS), and 175–178 (LRTR). Ser47 is a binding site for Mg(2+). The interval 173–181 (DVLRTRVKT) is G2 motif. Thr181 is a binding site for Mg(2+). Residues 196–205 (FKMFDVGGQR) form a G3 motif region. GTP contacts are provided by residues 200 to 204 (DVGGQ), 269 to 272 (NKKD), and Ala326. The segment at 265-272 (ILFLNKKD) is G4 motif. Positions 324 to 329 (TCATDT) are G5 motif.

The protein belongs to the G-alpha family. G(i/o/t/z) subfamily. As to quaternary structure, heterotrimeric G proteins are composed of 3 units; alpha, beta and gamma. The alpha chain contains the guanine nucleotide binding site. Part of a spindle orientation complex. Identified in complex with the beta subunit GNB1 and the gamma subunit GNG1. Identified in complex with the beta subunit GNB1 and the gamma subunit GNG2. GTP binding causes dissociation of the heterotrimer, liberating the individual subunits so that they can interact with downstream effector proteins. In terms of processing, myristoylation at Gly-2 is required for membrane anchoring before palmitoylation. Palmitoylation at Cys-3 varies with membrane lipid composition.

Its subcellular location is the nucleus. The protein localises to the cytoplasm. The protein resides in the cell membrane. It localises to the cytoskeleton. It is found in the microtubule organizing center. Its subcellular location is the centrosome. The protein localises to the cell cortex. The protein resides in the membrane. It carries out the reaction GTP + H2O = GDP + phosphate + H(+). Its function is as follows. Guanine nucleotide-binding proteins (G proteins) function as transducers downstream of G protein-coupled receptors (GPCRs) in numerous signaling cascades. The alpha chain contains the guanine nucleotide binding site and alternates between an active, GTP-bound state and an inactive, GDP-bound state. Signaling by an activated GPCR promotes GDP release and GTP binding. The alpha subunit has a low GTPase activity that converts bound GTP to GDP, thereby terminating the signal. Both GDP release and GTP hydrolysis are modulated by numerous regulatory proteins. Signaling is mediated via effector proteins, such as adenylate cyclase. Inhibits adenylate cyclase activity, leading to decreased intracellular cAMP levels. Required for cortical dynein-dynactin complex recruitment during metaphase. The sequence is that of Guanine nucleotide-binding protein G(i) subunit alpha-1 (gnai1) from Xenopus laevis (African clawed frog).